The primary structure comprises 191 residues: Protein GrpE (191 aa).

Belongs to the GrpE family. Homodimer.

It localises to the cytoplasm. In terms of biological role, participates actively in the response to hyperosmotic and heat shock by preventing the aggregation of stress-denatured proteins, in association with DnaK and GrpE. It is the nucleotide exchange factor for DnaK and may function as a thermosensor. Unfolded proteins bind initially to DnaJ; upon interaction with the DnaJ-bound protein, DnaK hydrolyzes its bound ATP, resulting in the formation of a stable complex. GrpE releases ADP from DnaK; ATP binding to DnaK triggers the release of the substrate protein, thus completing the reaction cycle. Several rounds of ATP-dependent interactions between DnaJ, DnaK and GrpE are required for fully efficient folding. The polypeptide is Protein GrpE (Listeria welshimeri serovar 6b (strain ATCC 35897 / DSM 20650 / CCUG 15529 / CIP 8149 / NCTC 11857 / SLCC 5334 / V8)).